The sequence spans 285 residues: K88 fimbrial protein AB (285 aa).

Residues 1-21 (MKKTLIALAIAASAASGMAHA) form the signal peptide.

Belongs to the fimbrial K88 protein family. In terms of assembly, K88 fimbria, 0.1-1 micrometer in length and 7 nanometers in diameter, is composed of about 100 identical subunits.

The protein resides in the fimbrium. In terms of biological role, K88 major fimbrial subunit. Fimbriae (also called pili), are polar filaments radiating from the surface of the bacterium to a length of 0.5-1.5 micrometers and numbering 100-300 per cell. They enable bacteria to colonize the epithelium of specific host organs. This Escherichia coli protein is K88 fimbrial protein AB (faeG).